The following is a 308-amino-acid chain: Pantothenate kinase (308 aa).

93–100 is a binding site for ATP; that stretch reads GSVAVGKS.

Belongs to the prokaryotic pantothenate kinase family.

The protein localises to the cytoplasm. It carries out the reaction (R)-pantothenate + ATP = (R)-4'-phosphopantothenate + ADP + H(+). The protein operates within cofactor biosynthesis; coenzyme A biosynthesis; CoA from (R)-pantothenate: step 1/5. This Corynebacterium diphtheriae (strain ATCC 700971 / NCTC 13129 / Biotype gravis) protein is Pantothenate kinase.